Here is a 467-residue protein sequence, read N- to C-terminus: MALQRRFFQFVIITLLIPSFILGYTSAVHEDPPHDYHLEEYGYDFKAYPSYITTIGDNDFGSSMSHENGIFGLRKVDYGMDRVLDASKTVNVDDFGAKGDGRDDTKAFEKAWKAACSSTSSAVLLVPKKNYLVRPISFSGPCKSGLTMQIYGTIEASDDRSDYRKDGRHWLVFDSVQNLRVEGGGTINGNGKIWWQNSCKTNKALPCKDAPTALTFYKSKHVIVKNLKIENAQQIHVSFDNCVNVQASNLMVTAPENSPNTDGIHVTGTQNIHISSCVIGTGDDCISIVNGSRKVRVNDITCGPGHGISIGSLGYGNSEAHVSDVVVNGAKLCGTTNGVRIKTWQGGSGSASNIKFQNVEMHNVENPIIIDQNYCDQDKPCQEQSSAVQVKNVVYQNIKGTCASNVAITFDCSKRFPCQGIVLEDVDLEIEGGAAAKALCNNVELSETGVVSPHCQEEGGEEEEEAS.

The first 27 residues, 1–27 (MALQRRFFQFVIITLLIPSFILGYTSA), serve as a signal peptide directing secretion. The active-site Proton donor is aspartate 283. Residue asparagine 290 is glycosylated (N-linked (GlcNAc...) asparagine). Histidine 306 is a catalytic residue.

It belongs to the glycosyl hydrolase 28 family.

Its subcellular location is the secreted. The protein resides in the cell wall. The catalysed reaction is (1,4-alpha-D-galacturonosyl)n+m + H2O = (1,4-alpha-D-galacturonosyl)n + (1,4-alpha-D-galacturonosyl)m.. Acts in concert with the pectinesterase, in the ripening process. Is involved in cell wall metabolism, specifically in polyuronide degradation. In Actinidia deliciosa (Kiwi), this protein is Polygalacturonase.